The primary structure comprises 320 residues: Small ribosomal subunit protein uS2 (320 aa).

Acidic residues predominate over residues 1–22 (MADETTTDTPDVQDEDAPDEDA). A disordered region spans residues 1-83 (MADETTTDTP…SSSEEETSHR (83 aa)). Residues 27 to 41 (DDTASDSTGEAAAAD) are compositionally biased toward low complexity. Composition is skewed to acidic residues over residues 42–57 (TDAD…EDAP) and 65–78 (DDGD…SSEE).

This sequence belongs to the universal ribosomal protein uS2 family.

In Salinibacter ruber (strain DSM 13855 / M31), this protein is Small ribosomal subunit protein uS2.